Consider the following 292-residue polypeptide: Elongation factor Ts (292 aa).

The segment at 80-83 is involved in Mg(2+) ion dislocation from EF-Tu; it reads TDFV.

It belongs to the EF-Ts family.

It localises to the cytoplasm. Its function is as follows. Associates with the EF-Tu.GDP complex and induces the exchange of GDP to GTP. It remains bound to the aminoacyl-tRNA.EF-Tu.GTP complex up to the GTP hydrolysis stage on the ribosome. The chain is Elongation factor Ts from Cupriavidus pinatubonensis (strain JMP 134 / LMG 1197) (Cupriavidus necator (strain JMP 134)).